The chain runs to 616 residues: Probable methyltransferase PMT2 (616 aa).

At Met-1 to Arg-13 the chain is on the cytoplasmic side. A helical; Signal-anchor for type II membrane protein transmembrane segment spans residues Ser-14–Trp-34. At Gln-35–His-616 the chain is on the lumenal side. N-linked (GlcNAc...) asparagine glycosylation is found at Asn-205 and Asn-611.

Belongs to the methyltransferase superfamily.

The protein localises to the golgi apparatus membrane. This Arabidopsis thaliana (Mouse-ear cress) protein is Probable methyltransferase PMT2.